A 173-amino-acid chain; its full sequence is MPSNQNRDNFIDKAFTVIAESIVKIMPIAEKEKKAYIYYRDGLAAQNNGDYSEALEYYKESLLLEENKIDRGETLKNMAIIYMSNGEEDLSIETYEKALVENPKQPSCLKNIGLIYEKRGRNAEQNGDLDQRDIWFDKAAEVWSKAVRLYPGGYLDIENWLKNSGRSSIDMYL.

3 TPR repeats span residues 35–68, 72–105, and 120–153; these read AYIY…EENK, GETL…NPKQ, and GRNA…YPGG.

This sequence belongs to the Ycf3 family.

The protein localises to the cellular thylakoid membrane. Essential for the assembly of the photosystem I (PSI) complex. May act as a chaperone-like factor to guide the assembly of the PSI subunits. This Prochlorococcus marinus (strain MIT 9301) protein is Photosystem I assembly protein Ycf3.